The primary structure comprises 204 residues: Probable chorismate pyruvate-lyase (204 aa).

R75, L113, and E160 together coordinate substrate.

The protein belongs to the UbiC family.

The protein localises to the cytoplasm. The enzyme catalyses chorismate = 4-hydroxybenzoate + pyruvate. It participates in cofactor biosynthesis; ubiquinone biosynthesis. In terms of biological role, removes the pyruvyl group from chorismate, with concomitant aromatization of the ring, to provide 4-hydroxybenzoate (4HB) for the ubiquinone pathway. The protein is Probable chorismate pyruvate-lyase of Alcanivorax borkumensis (strain ATCC 700651 / DSM 11573 / NCIMB 13689 / SK2).